Consider the following 171-residue polypeptide: 3-hydroxydecanoyl-[acyl-carrier-protein] dehydratase (171 aa).

Residue H70 is part of the active site.

Belongs to the thioester dehydratase family. FabA subfamily. Homodimer.

It is found in the cytoplasm. The enzyme catalyses a (3R)-hydroxyacyl-[ACP] = a (2E)-enoyl-[ACP] + H2O. It carries out the reaction (3R)-hydroxydecanoyl-[ACP] = (2E)-decenoyl-[ACP] + H2O. It catalyses the reaction (2E)-decenoyl-[ACP] = (3Z)-decenoyl-[ACP]. Its pathway is lipid metabolism; fatty acid biosynthesis. Necessary for the introduction of cis unsaturation into fatty acids. Catalyzes the dehydration of (3R)-3-hydroxydecanoyl-ACP to E-(2)-decenoyl-ACP and then its isomerization to Z-(3)-decenoyl-ACP. Can catalyze the dehydratase reaction for beta-hydroxyacyl-ACPs with saturated chain lengths up to 16:0, being most active on intermediate chain length. The polypeptide is 3-hydroxydecanoyl-[acyl-carrier-protein] dehydratase (Pseudomonas syringae pv. syringae (strain B728a)).